A 333-amino-acid chain; its full sequence is O-acetyl transferase (333 aa).

This sequence belongs to the acyltransferase 3 family.

Its subcellular location is the host cell inner membrane. Antigenically converts S.flexneri serotype X to 3a, Y to 3b, 1a to 1b and 4a to 4b by O-acetylating the O-antigenic polysaccharide chain. This chain is O-acetyl transferase (OAC), found in Shigella flexneri (Shigella flexneri bacteriophage VI).